The following is a 430-amino-acid chain: Serine--tRNA ligase (430 aa).

Positions 41–60 (QSRTQDLQNERNVRSKSIGK) are disordered. L-serine is bound at residue 236-238 (TAE). 267-269 (RSE) lines the ATP pocket. E290 serves as a coordination point for L-serine. 354–357 (EISS) lines the ATP pocket. L-serine is bound at residue S390.

This sequence belongs to the class-II aminoacyl-tRNA synthetase family. Type-1 seryl-tRNA synthetase subfamily. Homodimer. The tRNA molecule binds across the dimer.

Its subcellular location is the cytoplasm. It carries out the reaction tRNA(Ser) + L-serine + ATP = L-seryl-tRNA(Ser) + AMP + diphosphate + H(+). The catalysed reaction is tRNA(Sec) + L-serine + ATP = L-seryl-tRNA(Sec) + AMP + diphosphate + H(+). It functions in the pathway aminoacyl-tRNA biosynthesis; selenocysteinyl-tRNA(Sec) biosynthesis; L-seryl-tRNA(Sec) from L-serine and tRNA(Sec): step 1/1. Its function is as follows. Catalyzes the attachment of serine to tRNA(Ser). Is also able to aminoacylate tRNA(Sec) with serine, to form the misacylated tRNA L-seryl-tRNA(Sec), which will be further converted into selenocysteinyl-tRNA(Sec). In Alteromonas mediterranea (strain DSM 17117 / CIP 110805 / LMG 28347 / Deep ecotype), this protein is Serine--tRNA ligase.